The primary structure comprises 200 residues: Golgi to ER traffic protein 1 (200 aa).

Residues 1–6 (MEPYTL) are Lumenal-facing. The helical transmembrane segment at 7–26 (LLFIFVIQIVKQIISAVGKQ) threads the bilayer. Residues 27–113 (SIESISWVLY…KVNTFTGYLI (87 aa)) lie on the Cytoplasmic side of the membrane. A coiled-coil region spans residues 75–107 (AKWTKLNRQHDKLVAEIEQLQKEVDLDKVKVNT). The helical transmembrane segment at 114–134 (AILTSIPIWFFRVWYRSVVLF) threads the bilayer. Residues 135-158 (YFPPGILPRALEWSIALPFTVTGG) are Lumenal-facing. A helical membrane pass occupies residues 159 to 175 (VSLTVWMMAAGAVASSL). Residues 176-200 (TFLFMFPFEKAVPKPVLAKKSPQQL) are Cytoplasmic-facing.

Belongs to the WRB/GET1 family. In terms of assembly, component of the Golgi to ER traffic (GET) complex, which is composed of GET1, GET2 and GET3. Within the complex, GET1 and GET2 form a heterotetramer which is stabilized by phosphatidylinositol binding and which binds to the GET3 homodimer.

It localises to the endoplasmic reticulum membrane. Its subcellular location is the golgi apparatus membrane. Required for the post-translational delivery of tail-anchored (TA) proteins to the endoplasmic reticulum. Together with GET2, acts as a membrane receptor for soluble GET3, which recognizes and selectively binds the transmembrane domain of TA proteins in the cytosol. The GET complex cooperates with the HDEL receptor ERD2 to mediate the ATP-dependent retrieval of resident ER proteins that contain a C-terminal H-D-E-L retention signal from the Golgi to the ER. This is Golgi to ER traffic protein 1 from Meyerozyma guilliermondii (strain ATCC 6260 / CBS 566 / DSM 6381 / JCM 1539 / NBRC 10279 / NRRL Y-324) (Yeast).